The primary structure comprises 223 residues: FAD-dependent monooxygenase imqC (223 aa).

FAD-binding positions include 139 to 141 (RFY), Tyr189, and Asp210.

Belongs to the PheA/TfdB FAD monooxygenase family.

It participates in secondary metabolite biosynthesis. Its function is as follows. FAD-dependent monooxygenase; part of the gene cluster that mediates the biosynthesis of imizoquins A to D, tripeptide-derived alkaloids that serve a protective role against oxidative stress that are essential for normal germination. ImqB is a canonical three-module NRPS that assembles the tripeptide backbone of the imizoquins via condensation of Trp, Tyr, and Leu-derived precursors. N-methylation by imqF and phenol oxidation by imqC, followed by cyclization via the FAD-dependent oxidase imqH carry out the three-step transformation of L-tyrosine into tetrahydroisoquinoline. Importantly, this sequence requires the presence of a free amine in the tyrosine moiety, indicating that isoquinoline formation occurs prior to peptide bond formation. The imidazolidin-4-one ring of imizoquins could form following additional oxidation of the methyl-derived bridgehead carbon by imqH. Lastly, O-methylation by imqG and leucine hydroxylation by imqE complete biosynthesis of the imizoquins. The chain is FAD-dependent monooxygenase imqC from Aspergillus flavus (strain ATCC 200026 / FGSC A1120 / IAM 13836 / NRRL 3357 / JCM 12722 / SRRC 167).